Reading from the N-terminus, the 604-residue chain is Nuclear factor erythroid 2-related factor 2 (604 aa).

The short motif at D29 to G31 is the DLG motif element. S40 bears the Phosphoserine; by PKC mark. Positions E79–E82 match the ETGE motif motif. Residue S214 is modified to Phosphoserine. Residues T334–S447 are disordered. Polar residues-rich tracts occupy residues S340–R352 and P395–S407. N-linked (Glc) (glycation) lysine glycans are attached at residues K461, K471, and K486. In terms of domain architecture, bZIP spans L496–L559. R498 carries an N-linked (Glc) (glycation) arginine glycan. The segment at R498 to K517 is basic motif. The tract at residues I521–L528 is leucine-zipper. R568 is a glycosylation site (N-linked (Glc) (glycation) arginine). A disordered region spans residues E570–N604. K573 carries N-linked (Glc) (glycation) lysine glycosylation. The segment covering S578–D587 has biased composition (polar residues). A mediates interaction with CHD6 and is necessary to activate transcription region spans residues V590–K595. N6-acetyllysine; by CREBBP occurs at positions 595 and 598.

Belongs to the bZIP family. CNC subfamily. As to quaternary structure, heterodimer; heterodimerizes with small Maf proteins. Interacts (via the bZIP domain) with MAFG and MAFK; required for binding to antioxidant response elements (AREs) on DNA. Interacts with KEAP1; the interaction is direct and promotes ubiquitination by the BCR(KEAP1) E3 ubiquitin ligase complex. Forms a ternary complex with PGAM5 and KEAP1. Interacts with EEF1D at heat shock promoter elements (HSE). Interacts via its leucine-zipper domain with the coiled-coil domain of PMF1. Interacts with CHD6; involved in activation of the transcription. Interacts with ESRRB; represses NFE2L2 transcriptional activity. Interacts with MOTS-c, a peptide produced by the mitochondrially encoded 12S rRNA MT-RNR1; the interaction occurs in the nucleus following metabolic stress. Post-translationally, ubiquitinated in the cytoplasm by the BCR(KEAP1) E3 ubiquitin ligase complex leading to its degradation. In response to oxidative stress, electrophile metabolites, such as sulforaphane, modify KEAP1, leading to inhibit activity of the BCR(KEAP1) complex, promoting NFE2L2/NRF2 nuclear accumulation and activity. In response to autophagy, the BCR(KEAP1) complex is inactivated. Phosphorylated by EIF2AK3/PERK following unfolded protein response (UPR), promoting dissociation from its cytoplasmic inhibitor KEAP1, followed by its translocation into the nucleus. Phosphorylation of Ser-40 by PKC in response to oxidative stress dissociates NFE2L2 from its cytoplasmic inhibitor KEAP1, promoting its translocation into the nucleus. In terms of processing, acetylation at Lys-595 and Lys-598 increases nuclear localization whereas deacetylation by SIRT1 enhances cytoplasmic presence. Post-translationally, glycation impairs transcription factor activity by preventing heterodimerization with small Maf proteins. Deglycation by FN3K restores activity.

It is found in the cytoplasm. Its subcellular location is the cytosol. The protein resides in the nucleus. Transcription factor that plays a key role in the response to oxidative stress: binds to antioxidant response (ARE) elements present in the promoter region of many cytoprotective genes, such as phase 2 detoxifying enzymes, and promotes their expression, thereby neutralizing reactive electrophiles. In normal conditions, ubiquitinated and degraded in the cytoplasm by the BCR(KEAP1) complex. In response to oxidative stress, electrophile metabolites inhibit activity of the BCR(KEAP1) complex, promoting nuclear accumulation of NFE2L2/NRF2, heterodimerization with one of the small Maf proteins and binding to ARE elements of cytoprotective target genes. The NFE2L2/NRF2 pathway is also activated in response to selective autophagy: autophagy promotes interaction between KEAP1 and SQSTM1/p62 and subsequent inactivation of the BCR(KEAP1) complex, leading to NFE2L2/NRF2 nuclear accumulation and expression of cytoprotective genes. The NFE2L2/NRF2 pathway is also activated during the unfolded protein response (UPR), contributing to redox homeostasis and cell survival following endoplasmic reticulum stress. May also be involved in the transcriptional activation of genes of the beta-globin cluster by mediating enhancer activity of hypersensitive site 2 of the beta-globin locus control region. Also plays an important role in the regulation of the innate immune response. It is a critical regulator of the innate immune response and survival during sepsis by maintaining redox homeostasis and restraint of the dysregulation of pro-inflammatory signaling pathways like MyD88-dependent and -independent and TNF-alpha signaling. Suppresses macrophage inflammatory response by blocking pro-inflammatory cytokine transcription and the induction of IL6. Binds to the proximity of pro-inflammatory genes in macrophages and inhibits RNA Pol II recruitment. The inhibition is independent of the Nrf2-binding motif and reactive oxygen species level. Represses antiviral cytosolic DNA sensing by suppressing the expression of the adapter protein STING1 and decreasing responsiveness to STING1 agonists while increasing susceptibility to infection with DNA viruses. This is Nuclear factor erythroid 2-related factor 2 from Rattus norvegicus (Rat).